The primary structure comprises 695 residues: Elongation factor G (695 aa).

In terms of domain architecture, tr-type G spans 12 to 286; sequence DKLRNIGIMA…AVIDYLPSPL (275 aa). GTP contacts are provided by residues 21-28, 85-89, and 139-142; these read AHIDAGKT, DTPGH, and NKMD.

This sequence belongs to the TRAFAC class translation factor GTPase superfamily. Classic translation factor GTPase family. EF-G/EF-2 subfamily.

Its subcellular location is the cytoplasm. In terms of biological role, catalyzes the GTP-dependent ribosomal translocation step during translation elongation. During this step, the ribosome changes from the pre-translocational (PRE) to the post-translocational (POST) state as the newly formed A-site-bound peptidyl-tRNA and P-site-bound deacylated tRNA move to the P and E sites, respectively. Catalyzes the coordinated movement of the two tRNA molecules, the mRNA and conformational changes in the ribosome. The protein is Elongation factor G of Thermotoga sp. (strain RQ2).